Reading from the N-terminus, the 140-residue chain is T cell receptor alpha chain constant (140 aa).

One can recognise an Ig-like C1-type domain in the interval 19–107 (KSVCLFTDFD…LVEKSFETDT (89 aa)). Cys-22 and Cys-72 form a disulfide bridge. Asn-32, Asn-66, Asn-77, and Asn-113 each carry an N-linked (GlcNAc...) asparagine glycan. The connecting peptide stretch occupies residues 94–115 (CDVKLVEKSFETDTNLNFQNLS). A helical membrane pass occupies residues 116–138 (VIGFRILLLKVAGFNLLMTLRLW). Residues 139–140 (SS) lie on the Cytoplasmic side of the membrane.

As to quaternary structure, alpha-beta TR is a heterodimer composed of an alpha and beta chain; disulfide-linked. The alpha-beta TR is associated with the transmembrane signaling CD3 coreceptor proteins to form the TR-CD3 (TcR or TCR). The assembly of alpha-beta TR heterodimers with CD3 occurs in the endoplasmic reticulum where a single alpha-beta TR heterodimer associates with one CD3D-CD3E heterodimer, one CD3G-CD3E heterodimer and one CD247 homodimer forming a stable octameric structure. CD3D-CD3E and CD3G-CD3E heterodimers preferentially associate with TR alpha and TR beta chains, respectively. The association of the CD247 homodimer is the last step of TcR assembly in the endoplasmic reticulum and is required for transport to the cell surface.

The protein localises to the cell membrane. Constant region of T cell receptor (TR) alpha chain. Alpha-beta T cell receptors are antigen specific receptors which are essential to the immune response and are present on the cell surface of T lymphocytes. Recognize peptide-major histocompatibility (MH) (pMH) complexes that are displayed by antigen presenting cells (APC), a prerequisite for efficient T cell adaptive immunity against pathogens. Binding of alpha-beta TR to pMH complex initiates TR-CD3 clustering on the cell surface and intracellular activation of LCK that phosphorylates the ITAM motifs of CD3G, CD3D, CD3E and CD247 enabling the recruitment of ZAP70. In turn, ZAP70 phosphorylates LAT, which recruits numerous signaling molecules to form the LAT signalosome. The LAT signalosome propagates signal branching to three major signaling pathways, the calcium, the mitogen-activated protein kinase (MAPK) kinase and the nuclear factor NF-kappa-B (NF-kB) pathways, leading to the mobilization of transcription factors that are critical for gene expression and essential for T cell growth and differentiation. The T cell repertoire is generated in the thymus, by V-(D)-J rearrangement. This repertoire is then shaped by intrathymic selection events to generate a peripheral T cell pool of self-MH restricted, non-autoaggressive T cells. Post-thymic interaction of alpha-beta TR with the pMH complexes shapes TR structural and functional avidity. This chain is T cell receptor alpha chain constant, found in Homo sapiens (Human).